We begin with the raw amino-acid sequence, 121 residues long: uncharacterized protein (121 aa).

It localises to the mitochondrion. This is an uncharacterized protein from Arabidopsis thaliana (Mouse-ear cress).